The sequence spans 294 residues: Eukaryotic translation initiation factor 3 subunit G (294 aa).

The span at 1 to 22 shows a compositional bias: basic and acidic residues; sequence MQTFHHQDTGSEDFRQNTMDEK. 2 disordered regions span residues 1–42 and 164–211; these read MQTF…DGTK and GGMG…SDDD. The span at 30–42 shows a compositional bias: polar residues; it reads STPQITQNADGTK. A compositionally biased stretch (gly residues) spans 193–205; it reads GPGGPGGPGGAAG. One can recognise an RRM domain in the interval 214 to 292; sequence LTLRVTNLSE…LIMKVDYSKK (79 aa).

It belongs to the eIF-3 subunit G family. As to quaternary structure, component of the eukaryotic translation initiation factor 3 (eIF-3) complex.

The protein resides in the cytoplasm. In terms of biological role, RNA-binding component of the eukaryotic translation initiation factor 3 (eIF-3) complex, which is involved in protein synthesis of a specialized repertoire of mRNAs and, together with other initiation factors, stimulates binding of mRNA and methionyl-tRNAi to the 40S ribosome. The eIF-3 complex specifically targets and initiates translation of a subset of mRNAs involved in cell proliferation. This subunit can bind 18S rRNA. In Yarrowia lipolytica (strain CLIB 122 / E 150) (Yeast), this protein is Eukaryotic translation initiation factor 3 subunit G.